The following is a 191-amino-acid chain: Orotate phosphoribosyltransferase (191 aa).

Position 116-124 (116-124 (EDVVTTGGS)) interacts with 5-phospho-alpha-D-ribose 1-diphosphate. Orotate contacts are provided by threonine 120 and arginine 148.

The protein belongs to the purine/pyrimidine phosphoribosyltransferase family. PyrE subfamily. As to quaternary structure, homodimer. It depends on Mg(2+) as a cofactor.

The enzyme catalyses orotidine 5'-phosphate + diphosphate = orotate + 5-phospho-alpha-D-ribose 1-diphosphate. It functions in the pathway pyrimidine metabolism; UMP biosynthesis via de novo pathway; UMP from orotate: step 1/2. Its function is as follows. Catalyzes the transfer of a ribosyl phosphate group from 5-phosphoribose 1-diphosphate to orotate, leading to the formation of orotidine monophosphate (OMP). The chain is Orotate phosphoribosyltransferase from Heliobacterium modesticaldum (strain ATCC 51547 / Ice1).